The chain runs to 259 residues: Phosphatidylserine decarboxylase proenzyme (259 aa).

Residues D86, H142, and S226 each act as charge relay system; for autoendoproteolytic cleavage activity in the active site. Catalysis depends on S226, which acts as the Schiff-base intermediate with substrate; via pyruvic acid; for decarboxylase activity. At S226 the chain carries Pyruvic acid (Ser); by autocatalysis.

It belongs to the phosphatidylserine decarboxylase family. PSD-B subfamily. Prokaryotic type I sub-subfamily. As to quaternary structure, heterodimer of a large membrane-associated beta subunit and a small pyruvoyl-containing alpha subunit. Pyruvate serves as cofactor. Post-translationally, is synthesized initially as an inactive proenzyme. Formation of the active enzyme involves a self-maturation process in which the active site pyruvoyl group is generated from an internal serine residue via an autocatalytic post-translational modification. Two non-identical subunits are generated from the proenzyme in this reaction, and the pyruvate is formed at the N-terminus of the alpha chain, which is derived from the carboxyl end of the proenzyme. The autoendoproteolytic cleavage occurs by a canonical serine protease mechanism, in which the side chain hydroxyl group of the serine supplies its oxygen atom to form the C-terminus of the beta chain, while the remainder of the serine residue undergoes an oxidative deamination to produce ammonia and the pyruvoyl prosthetic group on the alpha chain. During this reaction, the Ser that is part of the protease active site of the proenzyme becomes the pyruvoyl prosthetic group, which constitutes an essential element of the active site of the mature decarboxylase.

The protein resides in the cell membrane. The catalysed reaction is a 1,2-diacyl-sn-glycero-3-phospho-L-serine + H(+) = a 1,2-diacyl-sn-glycero-3-phosphoethanolamine + CO2. The protein operates within phospholipid metabolism; phosphatidylethanolamine biosynthesis; phosphatidylethanolamine from CDP-diacylglycerol: step 2/2. Its function is as follows. Catalyzes the formation of phosphatidylethanolamine (PtdEtn) from phosphatidylserine (PtdSer). The polypeptide is Phosphatidylserine decarboxylase proenzyme (Geobacillus sp. (strain WCH70)).